The primary structure comprises 361 residues: 3-dehydroquinate synthase (361 aa).

NAD(+) contacts are provided by residues 72–77, 130–131, Lys142, and Lys151; these read SGEKEK and TT. 3 residues coordinate Zn(2+): Glu184, His247, and His264.

Belongs to the sugar phosphate cyclases superfamily. Dehydroquinate synthase family. The cofactor is NAD(+). Requires Co(2+) as cofactor. Zn(2+) serves as cofactor.

The protein localises to the cytoplasm. The catalysed reaction is 7-phospho-2-dehydro-3-deoxy-D-arabino-heptonate = 3-dehydroquinate + phosphate. It participates in metabolic intermediate biosynthesis; chorismate biosynthesis; chorismate from D-erythrose 4-phosphate and phosphoenolpyruvate: step 2/7. Catalyzes the conversion of 3-deoxy-D-arabino-heptulosonate 7-phosphate (DAHP) to dehydroquinate (DHQ). The polypeptide is 3-dehydroquinate synthase (Bacillus cereus (strain ATCC 14579 / DSM 31 / CCUG 7414 / JCM 2152 / NBRC 15305 / NCIMB 9373 / NCTC 2599 / NRRL B-3711)).